Reading from the N-terminus, the 422-residue chain is MDRRHRVYRVFNQEMYVEPNFKVVKELGQGAYGIVCAARNVASKDQEAVAIKKITNVFSKSILTKRALREIKLLIHFRNHRNITCIYDLDIINPYNFNEVYIYEELMEADLNAIIKSGQPLTDAHFQSFIYQILCGLKYIHSANVIHRDLKPGNLLVNADCELKICDFGLARGCSENPEENPGFMTEYVATRWYRAPEIMLSFSSYHKGIDVWSVGCILAELLGGTPLFKGKDFVHQLNLILHQLGTPDEETLSHISSSRAQEYVRSLPKQRPIPFETNFPKANPLALDLLAKLLAFDPNRRISVDDALEHPYLAVWHDPSDEPVCDSVFDFSFEYIEDANELRRVILDEVLNFRQKVRRRSHPTNPTVNIPQPAQTVPSNDNGSFNVSSSSSSQTSNKKRHDHSYNETAAIDHKSDDNRHN.

The 294-residue stretch at 21-314 folds into the Protein kinase domain; that stretch reads FKVVKELGQG…VDDALEHPYL (294 aa). ATP-binding positions include 27–35 and K52; that span reads LGQGAYGIV. D149 (proton acceptor) is an active-site residue. The residue at position 186 (T186) is a Phosphothreonine. The TXY motif lies at 186–188; sequence TEY. Y188 carries the post-translational modification Phosphotyrosine. The disordered stretch occupies residues 359–422; it reads RRRSHPTNPT…DHKSDDNRHN (64 aa). Polar residues predominate over residues 364–379; the sequence is PTNPTVNIPQPAQTVP. Positions 380–397 are enriched in low complexity; the sequence is SNDNGSFNVSSSSSSQTS. The span at 411 to 422 shows a compositional bias: basic and acidic residues; that stretch reads AIDHKSDDNRHN.

It belongs to the protein kinase superfamily. CMGC Ser/Thr protein kinase family. MAP kinase subfamily. Mg(2+) is required as a cofactor. In terms of processing, dually phosphorylated on Thr-186 and Tyr-188, which activates the enzyme.

The enzyme catalyses L-seryl-[protein] + ATP = O-phospho-L-seryl-[protein] + ADP + H(+). The catalysed reaction is L-threonyl-[protein] + ATP = O-phospho-L-threonyl-[protein] + ADP + H(+). Activated by tyrosine and threonine phosphorylation by skh1/pek1. Regulates cell integrity and functions coordinately with the protein kinase C pathway (pck1 and pck2). Involved the regulation of wall architecture, cell shape, cytokinesis in exponential and stationary phase, and metabolism of ions. This chain is Mitogen-activated protein kinase spm1 (spm1), found in Schizosaccharomyces pombe (strain 972 / ATCC 24843) (Fission yeast).